The chain runs to 87 residues: MALAVRVVYCGAUGYKSKYLQLKKKLEDEFPGRLDICGEGTPQATGFFEVMVAGKLIHSKKKGDGYVDTESKFLKLVAAIKAALAQG.

Residues 10–13 constitute a cross-link (cysteinyl-selenocysteine (Cys-Sec); redox-active); it reads CGAU. A non-standard amino acid (selenocysteine) is located at residue Sec-13. Residue Cys-37 is modified to S-glutathionyl cysteine.

This sequence belongs to the SelWTH family. Selenoprotein W subfamily. Interacts with DPYSL2, PRDX1, YWHAB, YWHAG, HSP70 and HSP90. In terms of tissue distribution, highest levels detected in skeletal muscle, tongue, heart and brain. Expressed at significantly higher levels in female skeletal muscle than in male and at slightly higher levels in female cardiac muscle than in male (at protein level). Also detected at low levels in liver.

The protein resides in the cytoplasm. Its function is as follows. Plays a role as a glutathione (GSH)-dependent antioxidant. May be involved in a redox-related process. May play a role in the myopathies of selenium deficiency. The sequence is that of Selenoprotein W from Macaca mulatta (Rhesus macaque).